Here is a 125-residue protein sequence, read N- to C-terminus: Mitochondrial import inner membrane translocase subunit TIM16 (125 aa).

A J-like region spans residues 58–110; sequence EAQQILNVSKLSPEEVQKNYEHLFKVNDKSVGGSFYLQSKVVRAKERLDEELR. Ser69 is subject to Phosphoserine.

Belongs to the TIM16/PAM16 family. Probable component of the PAM complex at least composed of a mitochondrial HSP70 protein, GRPEL1 or GRPEL2, TIMM44, TIMM16/PAM16 and TIMM14/DNAJC19. Interacts with DNAJC19. Directly interacts with DNAJC15; this interaction counteracts DNAJC15-dependent stimulation of HSPA9 ATPase activity. Associates with the TIM23 complex. In terms of tissue distribution, expressed in trabecular bone and cartilage and by differentiated chondrocytes localized in the hypertrophic zone and by osteoblasts at early developmental stages.

It is found in the mitochondrion inner membrane. Its function is as follows. Regulates ATP-dependent protein translocation into the mitochondrial matrix. Inhibits DNAJC19 stimulation of HSPA9/Mortalin ATPase activity. This chain is Mitochondrial import inner membrane translocase subunit TIM16, found in Mus musculus (Mouse).